Consider the following 388-residue polypeptide: MAKKPKKLEEISKKFGAEREKALNDALKLIEKDFGKGSIMRLGERAEQKVQVMSSGSLALDIALGSGGYPKGRIIEIYGPESSGKTTVALHAVAQAQKEGGIAAFIDAEHALDPAYAAALGVNIDELLLSQPDSGEQGLEIAGKLIDSGAVDLVVVDSVAALVPRAEIDGDIGDSHVGLQARMMSQAMRKLGASINKTKTIAIFINQLREKVGVMFGNPETTPGGRALKFYASVRLDVRGNTQIKGTGDQKETNVGKETKIKVVKNKVAPPFKEAVVEIMYGEGISKTGELLKIASDLDIIKKAGAWYSYKDEKIGQGSENAKKYLAEHPEIFDEIDKQVRSKFGLIDGEEVSEQDTENKKDEPKKEEAVNEEVTLDLGDELEIEIEE.

79–86 (GPESSGKT) serves as a coordination point for ATP. The tract at residues 347–372 (IDGEEVSEQDTENKKDEPKKEEAVNE) is disordered. Positions 357–369 (TENKKDEPKKEEA) are enriched in basic and acidic residues.

This sequence belongs to the RecA family.

Its subcellular location is the cytoplasm. Can catalyze the hydrolysis of ATP in the presence of single-stranded DNA, the ATP-dependent uptake of single-stranded DNA by duplex DNA, and the ATP-dependent hybridization of homologous single-stranded DNAs. It interacts with LexA causing its activation and leading to its autocatalytic cleavage. This is Protein RecA from Streptococcus pneumoniae (strain CGSP14).